Here is a 444-residue protein sequence, read N- to C-terminus: Trigger factor (444 aa).

A PPIase FKBP-type domain is found at 166-251 (GDQIVIDFKG…VKAVKAPKPA (86 aa)).

This sequence belongs to the FKBP-type PPIase family. Tig subfamily.

The protein resides in the cytoplasm. The enzyme catalyses [protein]-peptidylproline (omega=180) = [protein]-peptidylproline (omega=0). Functionally, involved in protein export. Acts as a chaperone by maintaining the newly synthesized protein in an open conformation. Functions as a peptidyl-prolyl cis-trans isomerase. In Cereibacter sphaeroides (strain ATCC 17025 / ATH 2.4.3) (Rhodobacter sphaeroides), this protein is Trigger factor.